We begin with the raw amino-acid sequence, 152 residues long: Transcriptional regulator MraZ (152 aa).

SpoVT-AbrB domains lie at 5-52 (ASAI…PIHE) and 81-124 (AHEV…DEQS).

The protein belongs to the MraZ family. As to quaternary structure, forms oligomers.

The protein localises to the cytoplasm. Its subcellular location is the nucleoid. The protein is Transcriptional regulator MraZ of Shewanella baltica (strain OS155 / ATCC BAA-1091).